Here is a 265-residue protein sequence, read N- to C-terminus: Hydroxyethylthiazole kinase (265 aa).

Met-36 serves as a coordination point for substrate. Residues Lys-112 and Ser-160 each contribute to the ATP site. Position 187 (Gly-187) interacts with substrate.

Belongs to the Thz kinase family. Requires Mg(2+) as cofactor.

The catalysed reaction is 5-(2-hydroxyethyl)-4-methylthiazole + ATP = 4-methyl-5-(2-phosphooxyethyl)-thiazole + ADP + H(+). Its pathway is cofactor biosynthesis; thiamine diphosphate biosynthesis; 4-methyl-5-(2-phosphoethyl)-thiazole from 5-(2-hydroxyethyl)-4-methylthiazole: step 1/1. Catalyzes the phosphorylation of the hydroxyl group of 4-methyl-5-beta-hydroxyethylthiazole (THZ). This Clostridium perfringens (strain 13 / Type A) protein is Hydroxyethylthiazole kinase.